Here is a 379-residue protein sequence, read N- to C-terminus: Chaperone protein DnaJ (379 aa).

A J domain is found at 7–72; that stretch reads DYYEVLGVDK…KKRSMYDQFG (66 aa). The segment at 147 to 225 adopts a CR-type zinc-finger fold; that stretch reads GKKAELSYTR…CGGNGLERKK (79 aa). Zn(2+) contacts are provided by Cys160, Cys163, Cys177, Cys180, Cys199, Cys202, Cys213, and Cys216. 4 CXXCXGXG motif repeats span residues 160–167, 177–184, 199–206, and 213–220; these read CSECHGTG, CPDCKGTG, CPTCGGEG, and CKKCGGNG.

The protein belongs to the DnaJ family. In terms of assembly, homodimer. Requires Zn(2+) as cofactor.

The protein resides in the cytoplasm. Participates actively in the response to hyperosmotic and heat shock by preventing the aggregation of stress-denatured proteins and by disaggregating proteins, also in an autonomous, DnaK-independent fashion. Unfolded proteins bind initially to DnaJ; upon interaction with the DnaJ-bound protein, DnaK hydrolyzes its bound ATP, resulting in the formation of a stable complex. GrpE releases ADP from DnaK; ATP binding to DnaK triggers the release of the substrate protein, thus completing the reaction cycle. Several rounds of ATP-dependent interactions between DnaJ, DnaK and GrpE are required for fully efficient folding. Also involved, together with DnaK and GrpE, in the DNA replication of plasmids through activation of initiation proteins. The polypeptide is Chaperone protein DnaJ (Treponema denticola (strain ATCC 35405 / DSM 14222 / CIP 103919 / JCM 8153 / KCTC 15104)).